The chain runs to 300 residues: tRNA dimethylallyltransferase (300 aa).

8–15 (GASASGKS) lines the ATP pocket. Substrate is bound at residue 10-15 (SASGKS). The segment at 33 to 36 (DSLS) is interaction with substrate tRNA.

This sequence belongs to the IPP transferase family. Monomer. Requires Mg(2+) as cofactor.

It catalyses the reaction adenosine(37) in tRNA + dimethylallyl diphosphate = N(6)-dimethylallyladenosine(37) in tRNA + diphosphate. Its function is as follows. Catalyzes the transfer of a dimethylallyl group onto the adenine at position 37 in tRNAs that read codons beginning with uridine, leading to the formation of N6-(dimethylallyl)adenosine (i(6)A). This Wolinella succinogenes (strain ATCC 29543 / DSM 1740 / CCUG 13145 / JCM 31913 / LMG 7466 / NCTC 11488 / FDC 602W) (Vibrio succinogenes) protein is tRNA dimethylallyltransferase.